We begin with the raw amino-acid sequence, 421 residues long: Tryptophan synthase beta chain (421 aa).

Residue lysine 112 is modified to N6-(pyridoxal phosphate)lysine.

This sequence belongs to the TrpB family. In terms of assembly, tetramer of two alpha and two beta chains. Pyridoxal 5'-phosphate is required as a cofactor.

It catalyses the reaction (1S,2R)-1-C-(indol-3-yl)glycerol 3-phosphate + L-serine = D-glyceraldehyde 3-phosphate + L-tryptophan + H2O. The protein operates within amino-acid biosynthesis; L-tryptophan biosynthesis; L-tryptophan from chorismate: step 5/5. Functionally, the beta subunit is responsible for the synthesis of L-tryptophan from indole and L-serine. This chain is Tryptophan synthase beta chain (trpB), found in Mycobacterium bovis (strain ATCC BAA-935 / AF2122/97).